Here is a 661-residue protein sequence, read N- to C-terminus: Transketolase (661 aa).

Position 2 is an N-acetylserine (Ser2). His31 is a binding site for substrate. Residues His71 and 119–121 each bind thiamine diphosphate; that span reads GPL. Asp160 is a Mg(2+) binding site. Residues Gly161 and Asn190 each contribute to the thiamine diphosphate site. Mg(2+) is bound by residues Asn190 and Val192. Substrate-binding residues include His267, Arg359, and Ser386. His267 is a thiamine diphosphate binding site. Glu413 functions as the Proton donor in the catalytic mechanism. Position 439 (Phe439) interacts with thiamine diphosphate. Residues His463, Asp471, and Arg522 each contribute to the substrate site.

It belongs to the transketolase family. In terms of assembly, homodimer. The cofactor is Mg(2+). Ca(2+) is required as a cofactor. It depends on Mn(2+) as a cofactor. Requires Co(2+) as cofactor. Thiamine diphosphate serves as cofactor.

The enzyme catalyses D-sedoheptulose 7-phosphate + D-glyceraldehyde 3-phosphate = aldehydo-D-ribose 5-phosphate + D-xylulose 5-phosphate. Catalyzes the transfer of a two-carbon ketol group from a ketose donor to an aldose acceptor, via a covalent intermediate with the cofactor thiamine pyrophosphate. This is Transketolase (tkt-1) from Dictyostelium discoideum (Social amoeba).